Reading from the N-terminus, the 39-residue chain is Gas vesicle protein C (39 aa).

Belongs to the gas vesicle GvpC family.

Its subcellular location is the gas vesicle. Its function is as follows. Confers stability, involved in shaping gas vesicles, hollow, gas filled proteinaceous nanostructures. During planktonic growth they allow positioning of the organism at a favorable depth for light or nutrient acquisition. This chain is Gas vesicle protein C, found in Spirulina sp. (strain CCAP 1475/10).